The following is a 397-amino-acid chain: B3 domain-containing protein At4g34400 (397 aa).

The segment at residues 14 to 107 is a DNA-binding region (TF-B3); it reads PRFFTVFVSH…IFEVSIFRGY (94 aa). A disordered region spans residues 118-255; it reads ELEEEEEDSV…SSYAPDKEDT (138 aa). A compositionally biased stretch (basic and acidic residues) spans 137–160; it reads TGAKSEMKNTVPEGRDKGKSKVEV. 3 stretches are compositionally biased toward acidic residues: residues 161 to 186, 212 to 227, and 235 to 246; these read VEDSDDDEEEDSVYSESSEETETDTD, SSDDEEDEEEDSDSDY, and DIEENSISEEDS.

It is found in the nucleus. The polypeptide is B3 domain-containing protein At4g34400 (Arabidopsis thaliana (Mouse-ear cress)).